Consider the following 198-residue polypeptide: TM2 domain-containing protein 2 (198 aa).

An N-terminal signal peptide occupies residues 1–27; that stretch reads MRWPVPPVGYLLLGGQGLLLTFSLISS. Residues 28 to 128 are Extracellular-facing; that stretch reads QNQTSPVTYP…FLRGNKPCIK (101 aa). 3 N-linked (GlcNAc...) asparagine glycosylation sites follow: asparagine 29, asparagine 40, and asparagine 76. The chain crosses the membrane as a helical span at residues 129 to 149; that stretch reads YTGHYFITTLLYSFFLGCFGV. Positions 131–179 constitute a TM2 domain; that stretch reads GHYFITTLLYSFFLGCFGVDRFCLGHTGTAVGKLLTLGGLGIWWFVDLI. Residues 150-166 are Cytoplasmic-facing; sequence DRFCLGHTGTAVGKLLT. The chain crosses the membrane as a helical span at residues 167–187; that stretch reads LGGLGIWWFVDLILLITGGLM. At 188 to 198 the chain is on the extracellular side; sequence PSDNSNWCTIY.

The protein belongs to the TM2 family.

Its subcellular location is the membrane. The polypeptide is TM2 domain-containing protein 2 (tm2d2) (Xenopus tropicalis (Western clawed frog)).